The primary structure comprises 378 residues: Ribosomal RNA large subunit methyltransferase G (378 aa).

This sequence belongs to the methyltransferase superfamily. RlmG family.

The protein resides in the cytoplasm. The catalysed reaction is guanosine(1835) in 23S rRNA + S-adenosyl-L-methionine = N(2)-methylguanosine(1835) in 23S rRNA + S-adenosyl-L-homocysteine + H(+). Functionally, specifically methylates the guanine in position 1835 (m2G1835) of 23S rRNA. The protein is Ribosomal RNA large subunit methyltransferase G of Salmonella heidelberg (strain SL476).